Reading from the N-terminus, the 160-residue chain is Cyclic pyranopterin monophosphate synthase (160 aa).

Substrate contacts are provided by residues 77-79 (LCH) and 115-116 (ME). Asp130 is a catalytic residue.

Belongs to the MoaC family. As to quaternary structure, homohexamer; trimer of dimers.

It carries out the reaction (8S)-3',8-cyclo-7,8-dihydroguanosine 5'-triphosphate = cyclic pyranopterin phosphate + diphosphate. Its pathway is cofactor biosynthesis; molybdopterin biosynthesis. Catalyzes the conversion of (8S)-3',8-cyclo-7,8-dihydroguanosine 5'-triphosphate to cyclic pyranopterin monophosphate (cPMP). This chain is Cyclic pyranopterin monophosphate synthase, found in Parvibaculum lavamentivorans (strain DS-1 / DSM 13023 / NCIMB 13966).